The primary structure comprises 245 residues: MAKIVILFDFDRTLIDGDSDNWVVTEMGLTEIFHQLRFTLPWNRLMDRMMMELQSQGRSIDDIKSCLKKMPIDSHIIEAIKSAKSSGCDLKIVSDANQFFIEKILEHHDLVDCFSEIYTNPTSLDDNGNLRILPYHSDALPPHSCNLCPSNLCKGLVMDHLRASSSNDQIPRRFIYLGDGGGDFCPTLKLRECDFVMPRTNYPLWKKISDNPLLIKAEVKEWSSAEEQQRILLQLVSTITKEEDS.

The active-site Nucleophile is the Asp9. The Mg(2+) site is built by Asp9, Asp11, and Asp179. The Proton donor role is filled by Asp11.

Belongs to the HAD-like hydrolase superfamily. Monomer. Requires Mg(2+) as cofactor.

The catalysed reaction is thiamine phosphate + H2O = thiamine + phosphate. In terms of biological role, HAD-like hydrolase that has a thiamine monophosphate phosphatase activity in a heterologous system. Does not contribute to thiamine monophosphate phosphatase activity in planta. In Arabidopsis thaliana (Mouse-ear cress), this protein is Thiamine phosphate phosphatase-like protein.